The primary structure comprises 225 residues: Putative N-acetylmannosamine-6-phosphate 2-epimerase (225 aa).

The protein belongs to the NanE family.

It carries out the reaction an N-acyl-D-glucosamine 6-phosphate = an N-acyl-D-mannosamine 6-phosphate. It functions in the pathway amino-sugar metabolism; N-acetylneuraminate degradation; D-fructose 6-phosphate from N-acetylneuraminate: step 3/5. Converts N-acetylmannosamine-6-phosphate (ManNAc-6-P) to N-acetylglucosamine-6-phosphate (GlcNAc-6-P). This chain is Putative N-acetylmannosamine-6-phosphate 2-epimerase, found in Vibrio vulnificus (strain CMCP6).